A 436-amino-acid chain; its full sequence is GTPase Der (436 aa).

EngA-type G domains follow at residues 4 to 167 and 175 to 351; these read PTVA…PNEI and IKFS…HAQN. GTP is bound by residues 10–17, 57–61, 119–122, 181–188, 229–233, and 294–297; these read GRPNVGKS, DTGGI, NKVD, DTAGM, and NKWD. Residues 352–436 form the KH-like domain; sequence LRISSSVLND…PIHLIARKRK (85 aa).

Belongs to the TRAFAC class TrmE-Era-EngA-EngB-Septin-like GTPase superfamily. EngA (Der) GTPase family. In terms of assembly, associates with the 50S ribosomal subunit.

GTPase that plays an essential role in the late steps of ribosome biogenesis. This chain is GTPase Der, found in Lactococcus lactis subsp. cremoris (strain SK11).